We begin with the raw amino-acid sequence, 253 residues long: MTKPHDFKTKAIIVRKTKCGEADRILSLLTPDLGLIQGFAKSVRKTTSKLSGHLELLCYSEVSLARGKAIDTITGSQTIQSFLNIRNSLQLSAMAFYACELAYHFSPEEAANPALFQLLLSTLEELDNGSQPELCLKYFEINLLASSGYKPELRECANCHKKLQATINYYSPESGGVICPNCRNTQIGMPVSVNTVKVLRYIQENSFSSICRLKINREILSELELAIRANIRFVLEKEPKALFWLDSLRLADL.

Belongs to the RecO family.

In terms of biological role, involved in DNA repair and RecF pathway recombination. The protein is DNA repair protein RecO of Dehalococcoides mccartyi (strain ATCC BAA-2100 / JCM 16839 / KCTC 5957 / BAV1).